We begin with the raw amino-acid sequence, 298 residues long: Bifunctional methyltransferase/endonuclease (298 aa).

The tract at residues 1-79 (MQSIDLYSYL…SLGIDEKIRR (79 aa)) is probable methylated-DNA--protein-cysteine methyltransferase. Residue Cys56 is part of the active site. Residues 80–298 (LRNDGIEINN…TVALRRNNII (219 aa)) are endonuclease V. Mg(2+) contacts are provided by Asp137 and Asp197.

This sequence in the N-terminal section; belongs to the MGMT family. The protein in the C-terminal section; belongs to the endonuclease V family. It depends on Mg(2+) as a cofactor.

It is found in the cytoplasm. The enzyme catalyses Endonucleolytic cleavage at apurinic or apyrimidinic sites to products with a 5'-phosphate.. Its function is as follows. DNA repair enzyme involved in the repair of deaminated bases. Selectively cleaves double-stranded DNA at the second phosphodiester bond 3' to a deoxyinosine leaving behind the intact lesion on the nicked DNA. This Picrophilus torridus (strain ATCC 700027 / DSM 9790 / JCM 10055 / NBRC 100828 / KAW 2/3) protein is Bifunctional methyltransferase/endonuclease.